The sequence spans 308 residues: F420-non-reducing hydrogenase subunit G (308 aa).

The protein belongs to the [NiFe]/[NiFeSe] hydrogenase small subunit family. In terms of assembly, the F420-non-reducing hydrogenase is composed of three subunits; MvhA, MvhD and MvhG. It forms a complex with the heterodisulfide reductase (hdr).

Part of a complex that provides reducing equivalents for heterodisulfide reductase. The chain is F420-non-reducing hydrogenase subunit G (mvhG) from Methanothermobacter thermautotrophicus (strain ATCC 29096 / DSM 1053 / JCM 10044 / NBRC 100330 / Delta H) (Methanobacterium thermoautotrophicum).